The sequence spans 344 residues: Dihydroorotase (344 aa).

Residues histidine 13 and histidine 15 each contribute to the Zn(2+) site. Residues 15–17 (HVR) and asparagine 41 each bind substrate. Residues lysine 99, histidine 136, and histidine 174 each coordinate Zn(2+). Position 99 is an N6-carboxylysine (lysine 99). Histidine 136 provides a ligand contact to substrate. Residue leucine 219 participates in substrate binding. Aspartate 247 lines the Zn(2+) pocket. Aspartate 247 is a catalytic residue. 2 residues coordinate substrate: histidine 251 and alanine 263.

Belongs to the metallo-dependent hydrolases superfamily. DHOase family. Class II DHOase subfamily. Homodimer. Zn(2+) is required as a cofactor.

It catalyses the reaction (S)-dihydroorotate + H2O = N-carbamoyl-L-aspartate + H(+). It participates in pyrimidine metabolism; UMP biosynthesis via de novo pathway; (S)-dihydroorotate from bicarbonate: step 3/3. Its function is as follows. Catalyzes the reversible cyclization of carbamoyl aspartate to dihydroorotate. The polypeptide is Dihydroorotase (Aromatoleum aromaticum (strain DSM 19018 / LMG 30748 / EbN1) (Azoarcus sp. (strain EbN1))).